Reading from the N-terminus, the 710-residue chain is Polyribonucleotide nucleotidyltransferase (710 aa).

The Mg(2+) site is built by Asp-487 and Asp-493. The KH domain occupies 554-613; sequence PRIHTMKISAEKIKDVIGKGGAVIRALTEETGTTIEIEDDGTIKIAATEGAAAKEAIRRI. An S1 motif domain is found at 623–691; that stretch reads GRIYTGKVAR…RQGRVRLSMK (69 aa). Positions 691–710 are disordered; that stretch reads KEAVEKPAEEANDASEAKGE.

The protein belongs to the polyribonucleotide nucleotidyltransferase family. As to quaternary structure, component of the RNA degradosome, which is a multiprotein complex involved in RNA processing and mRNA degradation. Mg(2+) is required as a cofactor.

The protein resides in the cytoplasm. The enzyme catalyses RNA(n+1) + phosphate = RNA(n) + a ribonucleoside 5'-diphosphate. Functionally, involved in mRNA degradation. Catalyzes the phosphorolysis of single-stranded polyribonucleotides processively in the 3'- to 5'-direction. This Vibrio campbellii (strain ATCC BAA-1116) protein is Polyribonucleotide nucleotidyltransferase.